Reading from the N-terminus, the 393-residue chain is Phosphoglycerate kinase (393 aa).

Substrate is bound by residues 21-23 (DLN), Arg-37, 60-63 (HLGR), Arg-115, and Arg-148. ATP-binding positions include Lys-199, Glu-321, and 347–350 (GGDT).

It belongs to the phosphoglycerate kinase family. Monomer.

It localises to the cytoplasm. The enzyme catalyses (2R)-3-phosphoglycerate + ATP = (2R)-3-phospho-glyceroyl phosphate + ADP. It functions in the pathway carbohydrate degradation; glycolysis; pyruvate from D-glyceraldehyde 3-phosphate: step 2/5. This is Phosphoglycerate kinase from Dechloromonas aromatica (strain RCB).